Here is a 512-residue protein sequence, read N- to C-terminus: Hyaluronidase PH-20 (512 aa).

Positions 1–35 are cleaved as a signal peptide; sequence MGELRFKHLFWGSFVESGGTFQTVLIFLLIPCSLT. The N-linked (GlcNAc...) asparagine glycan is linked to asparagine 46. 2 disulfide bridges follow: cysteine 60–cysteine 351 and cysteine 223–cysteine 237. Glutamate 147 (proton donor) is an active-site residue. An N-linked (GlcNAc...) asparagine glycan is attached at asparagine 165. Asparagine 293 and asparagine 368 each carry an N-linked (GlcNAc...) asparagine glycan. Disulfide bonds link cysteine 376–cysteine 387, cysteine 381–cysteine 435, and cysteine 437–cysteine 464.

Belongs to the glycosyl hydrolase 56 family.

The protein localises to the cell membrane. The enzyme catalyses Random hydrolysis of (1-&gt;4)-linkages between N-acetyl-beta-D-glucosamine and D-glucuronate residues in hyaluronate.. In terms of biological role, involved in sperm-egg adhesion. Upon fertilization sperm must first penetrate a layer of cumulus cells that surrounds the egg before reaching the zona pellucida. The cumulus cells are embedded in a matrix containing hyaluronic acid which is formed prior to ovulation. This protein aids in penetrating the layer of cumulus cells by digesting hyaluronic acid. The chain is Hyaluronidase PH-20 (Spam1) from Mus musculus (Mouse).